The chain runs to 862 residues: MARAINSAYRSFINSSATDDRRTRMNAPRSLSALSTTANPALSTLVEQVCALIAPNWPLDRMIAVSPYWKRIDKPFAQAAAELKQLAASPMTMTLSDYHLRWQNKQIQSADLQQAIAEQNSDLSESTLIAALQQPTAPSHPWPLLCDTVDSRRDLEHHPAWNDAITHQISQFCAAYFDHHQADWSPDQQTGLFATWREAMIHDRSITLLLNETSVKQKATKLPEDAMAAIEQTLAQLAIAPAQQETYLQAVLMRISGWASWCAYLAWQAGFEGRHDEHLRDLLAIRLCWENLLDDGERGMGSVWLQWQQSWAPRQSCEEDRALRIALLWQRSAEIAYQRQLFAALTSAQESAPQSSYPEVQAAFCIDVRSEVIRRHLEAQSPHIQTLGFAGFFGLPIRYQLLGTEASRPQLPGLLAPSLIVSDSTGNEDQDAKLALRRRARLKRHFSWRAFHHLPASTFTLVETTGLAYLTKLLKRTLSYPALSASVERFAFTEHEWQSVKPQFTRDPQTLAQRAQMAANILRALGIATEQARLVLLVGHGSQTQNNPQRAGLDCGACCGQSGEVNARTLAALLNDQAVRQALPEYGISLRDDVHFIAALHNTTTEAMRLFDRHEIPTSHREALEQLDQQLTAASHGARQERAPSLELNHNHQAPPSKDNALSAQQLEQAFLRRAHDWAQTRPEWGLTNNAAFIIAPRQRSKQAKLDGRVFLHEYQPERDPEGQLLTQIMTAPMLVTHWINMQYFASTVDNRRFGSGNKTLHNVVGGNIGLFEGNGGDLRCGLALQSLHDGQGWRHEALRLTVVIDAPRERIEQVMASHRVVEHLVKHEWLYLARFADQGIEIYLQGTWQRITQPSSDSSAR.

The Zn(2+) site is built by C365, D367, H540, and C555.

The protein belongs to the inorganic carbon transporter (TC 9.A.2) DabA family. As to quaternary structure, forms a complex with DabB. It depends on Zn(2+) as a cofactor.

It localises to the cell inner membrane. Functionally, part of an energy-coupled inorganic carbon pump. This Vibrio cholerae serotype O1 (strain ATCC 39315 / El Tor Inaba N16961) protein is Probable inorganic carbon transporter subunit DabA.